Reading from the N-terminus, the 1015-residue chain is MSGGLFYNPFLRPNKGLLKKPDKEYLRLIPKCFQTPGAAGVVDVRGPQPPLCFYQDSLTVVGGDEDGKGMWWRQRAQEGTARPEADTHGSPLDFHVYDILETVYTHEKCAVIPSDKQGYVVPCGIVIKLLGRRKADGASVCVNVFGQQAYFYASAPQGLDVEFAVLSALKASTFDRRTPCRVSVEKVTRRSIMGYGNHAGDYHKITLSHPNSVCHVATWLQDKHGCRIFEANVDATRRFVLDNDFVTFGWYSCRRAIPRLQHRDSYAELEYDCEVGDLSVRREDSSWPSYQALAFDIECLGEEGFPTATNEADLILQISCVLWSTGEEAGRYRRILLTLGTCEDIEGVEVYEFPSELDMLYAFFQLIRDLSVEIVTGYNVANFDWPYILDRARHIYSINPASLGKIRAGGVCEVRRPHDAGKGFLRANTKVRITGLIPIDMYAVCRDKLSLSDYKLDTVARHLLGAKKEDVHYKEIPRLFAAGPEGRRRLGMYCVQDSALVMDLLNHFVIHVEVAEIAKIAHIPCRRVLDDGQQIRVFSCLLAAAQKENFILPMPSASDRDGYQGATVIQPLSGFYNSPVLVVDFASLYPSIIQAHNLCYSTMITPGEEHRLAGLRPGEDYESFRLTGGVYHFVKKHVHESFLASLLTSWLAKRKAIKKLLAACEDPRQRTILDKQQLAIKCTCNAVYGFTGVANGLFPCLSIAETVTLQGRTMLERAKAFVEALSPANLQALAPSPDAWAPLNPEGQLRVIYGDTDSLFIECRGFSESETLRFAEALAAHTTRSLFVAPISLEAEKTFSCLMLITKKRYVGVLTDGKTLMKGVELVRKTACKFVQTRCRRVLDLVLADARVKEAASLLSHRPFQESFTQGLPVGFLPVIDILNQAYTDLREGRVPMGELCFSTELSRKLSAYKSTQMPHLAVYQKFVERNEELPQIHDRIQYVFVEPKGGVKGARKTEMAEDPAYAERHGVPVAVDHYFDKLLQGAANILQCLFDNNSGAALSVLQNFTARPPF.

Belongs to the DNA polymerase type-B family. In terms of assembly, forms a complex with the major DNA-binding protein BALF2, the DNA polymerase processivity factor BMRF1, and the alkaline exonuclease BGLF5. Interacts with the putative helicase-primase complex composed of BBLF4, BSLF1 and BBLF2/3 proteins; these interactions may coordinate leading and lagging strand DNA synthesis at the replication fork.

The protein resides in the host nucleus. It carries out the reaction DNA(n) + a 2'-deoxyribonucleoside 5'-triphosphate = DNA(n+1) + diphosphate. In terms of biological role, replicates viral genomic DNA in the late phase of lytic infection, producing long concatemeric DNA. The replication complex is composed of six viral proteins: the DNA polymerase, processivity factor, primase, primase-associated factor, helicase, and ssDNA-binding protein. The chain is DNA polymerase catalytic subunit from Homo sapiens (Human).